The chain runs to 62 residues: Ribulose bisphosphate carboxylase/oxygenase activase, chloroplastic (62 aa).

Belongs to the RuBisCO activase family.

It localises to the plastid. Its subcellular location is the chloroplast stroma. In terms of biological role, activation of RuBisCO (ribulose-1,5-bisphosphate carboxylase/oxygenase; EC 4.1.1.39) involves the ATP-dependent carboxylation of the epsilon-amino group of lysine leading to a carbamate structure. This Vitis sp. (Grape) protein is Ribulose bisphosphate carboxylase/oxygenase activase, chloroplastic.